The chain runs to 491 residues: Probable cytosol aminopeptidase (491 aa).

Residues K263 and D268 each contribute to the Mn(2+) site. K275 is an active-site residue. Mn(2+)-binding residues include D286, D345, and E347. R349 is an active-site residue.

Belongs to the peptidase M17 family. Mn(2+) serves as cofactor.

It is found in the cytoplasm. It catalyses the reaction Release of an N-terminal amino acid, Xaa-|-Yaa-, in which Xaa is preferably Leu, but may be other amino acids including Pro although not Arg or Lys, and Yaa may be Pro. Amino acid amides and methyl esters are also readily hydrolyzed, but rates on arylamides are exceedingly low.. The enzyme catalyses Release of an N-terminal amino acid, preferentially leucine, but not glutamic or aspartic acids.. Its function is as follows. Presumably involved in the processing and regular turnover of intracellular proteins. Catalyzes the removal of unsubstituted N-terminal amino acids from various peptides. The protein is Probable cytosol aminopeptidase of Haemophilus influenzae (strain PittEE).